A 202-amino-acid chain; its full sequence is MPDFTIIQPDRKFDAAAVAGIFVRSSTSSSFPSASSYIAAKKRKNVDNTSTRKPYSYKDRKRKNTEEIRNIKKKLFMDLGIVRTNCGIDNEKQDREKAMKRKVTETIVTTYCELCEQNFSSSKMLLLHRGKVHNTPYIECHLCMKLFSQTIQFNRHMKTHYGPNAKIYVQCELCDRQFKDKQSLRTHWDVSHGSGDNQAVLA.

A disordered region spans residues 43 to 63 (RKNVDNTSTRKPYSYKDRKRK). C2H2-type zinc fingers lie at residues 110-133 (TYCE…GKVH), 138-160 (IECH…MKTH), and 169-192 (VQCE…DVSH).

The protein resides in the nucleus. The sequence is that of Putative zinc finger protein ZK686.5 from Caenorhabditis elegans.